We begin with the raw amino-acid sequence, 94 residues long: Enhancer of yellow 2 transcription factor (94 aa).

This sequence belongs to the ENY2 family. In terms of assembly, component of the nuclear pore complex (NPC)-associated AMEX complex (anchoring and mRNA export complex), composed of at least e(y)2 and xmas-2. Component of the SAGA transcription coactivator-HAT complexes, at least composed of Ada2b, e(y)2, Pcaf/Gcn5, Taf10 and Nipped-A/Trrap. Within the SAGA complex, e(y)2, Sgf11, and not/nonstop form an additional subcomplex of SAGA called the DUB module (deubiquitination module). Component of the THO complex, composed of at least e(y)2, HPR1, THO2, THOC5, THOC6 and THOC7. Interacts with e(y)1. Interacts with su(Hw) (via zinc fingers). Interacts with xmas-2; required for localization to the nuclear periphery. Interacts with the nuclear pore complex (NPC).

It localises to the nucleus. It is found in the nucleoplasm. The protein resides in the cytoplasm. In terms of biological role, involved in mRNA export coupled transcription activation by association with both the AMEX and the SAGA complexes. The SAGA complex is a multiprotein complex that activates transcription by remodeling chromatin and mediating histone acetylation and deubiquitination. Within the SAGA complex, participates in a subcomplex that specifically deubiquitinates histone H2B. The SAGA complex is recruited to specific gene promoters by activators, where it is required for transcription. Required for nuclear receptor-mediated transactivation. Involved in transcription elongation by recruiting the THO complex onto nascent mRNA. The AMEX complex functions in docking export-competent ribonucleoprotein particles (mRNPs) to the nuclear entrance of the nuclear pore complex (nuclear basket). AMEX participates in mRNA export and accurate chromatin positioning in the nucleus by tethering genes to the nuclear periphery. The chain is Enhancer of yellow 2 transcription factor from Drosophila mojavensis (Fruit fly).